Consider the following 144-residue polypeptide: Maximins 2/H8 type 1 (144 aa).

The signal sequence occupies residues 1 to 18 (MNFKYIVAVSFLIASAYA). The propeptide occupies 19-43 (RSEENEIQSLSQRDVLEEESLREMR). N70 bears the Asparagine amide mark. A propeptide spanning residues 74 to 123 (TAEEHEVMKRLETVMRDLDSLDYPEEASERETRGFNQEEIANLFTKKEKR) is cleaved from the precursor. I143 carries the post-translational modification Isoleucine amide.

This sequence belongs to the bombinin family. Expressed by the skin glands.

The protein resides in the secreted. Maximin-2 shows antibacterial activity against both Gram-positive and Gram-negative bacteria. It also shows antimicrobial activity against the fungus C.albicans, but not against A.flavus nor P.uticale. It has little hemolytic activity. Its function is as follows. Maximin-H8 shows antimicrobial activity against bacteria and against the fungus C.albicans. Shows strong hemolytic activity. This is Maximins 2/H8 type 1 from Bombina maxima (Giant fire-bellied toad).